A 231-amino-acid polypeptide reads, in one-letter code: NKG2-C type II integral membrane protein (231 aa).

Positions 1 to 12 (MNKQRGTFSEVS) are enriched in polar residues. A disordered region spans residues 1-31 (MNKQRGTFSEVSLAQDPKRQQRKPKDNKSSI). Over 1–70 (MNKQRGTFSE…CQGLLPPPEK (70 aa)) the chain is Cytoplasmic. Residues 16-28 (DPKRQQRKPKDNK) are compositionally biased toward basic and acidic residues. Residues 71 to 93 (LTAEVLGIICIVLMATVLKTVVL) form a helical; Signal-anchor for type II membrane protein membrane-spanning segment. Residues 94 to 231 (IPFLEQNNSF…SKRYYCKHKL (138 aa)) are Extracellular-facing. N-linked (GlcNAc...) asparagine glycosylation occurs at Asn100. The C-type lectin domain maps to 116–229 (HCPEEWITYS…GSSKRYYCKH (114 aa)). 3 disulfides stabilise this stretch: Cys117–Cys128, Cys145–Cys227, and Cys206–Cys219. Residue Asn149 is glycosylated (N-linked (GlcNAc...) asparagine).

As to quaternary structure, heterodimer with KLRD1; disulfide-linked. KLRD1-KLRC2 receptor complex interacts with TYROBP/DAP12 homodimer; this interaction is necessary for the expression on the cell surface. Natural killer cells.

It localises to the cell membrane. Immune activating receptor involved in self-nonself discrimination. In complex with KLRD1 on cytotoxic lymphocyte subsets, recognizes non-classical major histocompatibility MHC-E loaded with signal sequence-derived peptides from non-classical MHC-G molecules, likely playing a role in the generation and effector functions of adaptive natural killer (NK) cells and in maternal-fetal tolerance during pregnancy. Regulates the effector functions of terminally differentiated cytotoxic lymphocyte subsets, and in particular may play a role in adaptive NK cell response to viral infection. Upon MHC-E-peptide binding, transmits intracellular signals via the adapter protein TYROBP/DAP12, triggering the phosphorylation of proximal signaling molecules and cell activation. This chain is NKG2-C type II integral membrane protein (KLRC2), found in Macaca mulatta (Rhesus macaque).